Here is a 202-residue protein sequence, read N- to C-terminus: Solute carrier family 66 member 3 (202 aa).

The N-terminal stretch at 1–19 is a signal peptide; the sequence is MEAGLLWFCNWSTLGVCAA. 4 helical membrane passes run 33 to 53, 64 to 84, 94 to 114, and 171 to 191; these read SARG…LVFL, LTYL…LFVF, LPYM…KWII, and LTIL…TATV.

It localises to the membrane. The polypeptide is Solute carrier family 66 member 3 (Slc66a3) (Mus musculus (Mouse)).